Here is a 276-residue protein sequence, read N- to C-terminus: 28 kDa ribonucleoprotein, chloroplastic (276 aa).

The transit peptide at 1–57 (MATNGCLISLPPFFTTTKSISSYPFLSTQLKPISLSSSLPTLLSLNKRTTQFPTFVS) directs the protein to the chloroplast. 2 consecutive RRM domains span residues 97–175 (AKLF…KAAP) and 191–269 (YRIY…AAEE).

It localises to the plastid. The protein resides in the chloroplast. Functionally, probably involved in the 3'-end processing of chloroplast mRNA's. The sequence is that of 28 kDa ribonucleoprotein, chloroplastic from Nicotiana sylvestris (Wood tobacco).